We begin with the raw amino-acid sequence, 502 residues long: MSFLTTPKMLSEYQCLKNIGFSHKTVLKRRLFRKECTPALKSFYSTQDPALNEVRTEKLKNGVTYVCDPRPGHFSGLGVYVKAGSRYETKKFSGVSHFMDRLAFQATERTPVGEMKAKLENLGGNYMCSTSRESMIYQAAVFNDDVKSMSKLLAETVLAPKIQEDDLVHYRDSIIYENSELWTKPDALLGEFAHVTAFQNNTLGNCLLCTPDKVNGITATSIREYLKYFYRPEHLTLAYAGIPQEIAKEITKELYGHLPSSSLPPLEAIPSHYTGGFMGIKKSEAPPVPYQQEFTHVVIAMEGLPVTDPDIYALACLQFLLGGGGSFSAGGPGKGMYSRLYLNVLNQYPWVETCMAFNHSYTDSGLFGMFVTILDDAAHLAAPLIIRELCNTVLSVTSEETERAKNQLKSSLLMNLESRMISLEDLGRQIQTQNGLYITPKEMIEKIDALTPSDLSRVARRVLTGNVSNPGNGTGKPTVLIHGNVDEVGDVFALCKKAGIGH.

This sequence belongs to the peptidase M16 family. Heterodimer of mas2 (alpha) and mas1 (beta) subunits, forming the mitochondrial processing protease (MPP) in which mas2 is involved in substrate recognition and binding and mas1 is the catalytic subunit.

Its subcellular location is the mitochondrion matrix. Functionally, substrate recognition and binding subunit of the essential mitochondrial processing protease (MPP), which cleaves the mitochondrial sequence off newly imported precursors proteins. The sequence is that of Probable mitochondrial-processing peptidase subunit alpha (mas2) from Schizosaccharomyces pombe (strain 972 / ATCC 24843) (Fission yeast).